Consider the following 370-residue polypeptide: Protein STRICTOSIDINE SYNTHASE-LIKE 9 (370 aa).

The N-terminal stretch at 1 to 26 is a signal peptide; it reads MPINQKIPTWFAVPAVFAVLSVISYQ. N-linked (GlcNAc...) asparagine glycans are attached at residues Asn-97 and Asn-171.

The protein belongs to the strictosidine synthase family.

The protein resides in the vacuole. The polypeptide is Protein STRICTOSIDINE SYNTHASE-LIKE 9 (Arabidopsis thaliana (Mouse-ear cress)).